Consider the following 292-residue polypeptide: MTEFDLSTREGRWKHFGSVDPIEGTKPTTKNEMTDLQSTHKDFLFEIEEVGIKNLVYPVLVDQYQTAGTFSFSTSLTKDEKGINMSRIIESVEKHYDNGIELEFNTLYQVLRTLQTNMKQNAAGVDVSGKWFFDRYSPTTNIKAVGNADVTYGLAIDGDKVTRKELTIEATVTTLCPCSKEISEYSAHNQRGVVTVKTYINKDQNIVDDYKNKILDAMEANASSILYPILKRPDEKRVTERAYENPRFVEDLIRLIAADLVEFDWLDGFDIECRNEESIHQHDAFAKLKYRK.

It belongs to the GTP cyclohydrolase IV family.

It catalyses the reaction GTP + H2O = 7,8-dihydroneopterin 3'-triphosphate + formate + H(+). The protein operates within cofactor biosynthesis; 7,8-dihydroneopterin triphosphate biosynthesis; 7,8-dihydroneopterin triphosphate from GTP: step 1/1. Converts GTP to 7,8-dihydroneopterin triphosphate. The sequence is that of GTP cyclohydrolase FolE2 from Staphylococcus aureus (strain Mu50 / ATCC 700699).